Consider the following 111-residue polypeptide: MADKAILWALISASTKEGRKACSLSYFACKAAEAELGLAYMAANDNKEFLTSLSNIMRYKIDAGLSESYTCYLLSKGKIIRPYLKNLNPLQLAADCIETVNKIKDKNKKNH.

The polypeptide is Protein YibV (yibV) (Escherichia coli O157:H7).